The following is a 1102-amino-acid chain: Centrosomal protein of 128 kDa (1102 aa).

Phosphoserine is present on residues Ser-31, Ser-248, and Ser-290. Coiled coils occupy residues 215–822 (VSDR…LETE) and 878–959 (EELK…ALQM). The tract at residues 326-346 (QHQVPCISKQPLSHQDDQGDD) is disordered. 2 disordered regions span residues 991–1048 (SEKT…DHSR) and 1070–1102 (DPAS…KYKK). The segment covering 1009–1027 (QQRRDDTKPRIKSFRDDRP) has biased composition (basic and acidic residues). Composition is skewed to polar residues over residues 1039-1048 (HSSSCQDHSR) and 1076-1089 (GDTT…TSPQ). Residues 1090 to 1102 (SKKEEHEIKKYKK) are compositionally biased toward basic and acidic residues.

It localises to the cytoplasm. It is found in the cytoskeleton. The protein localises to the microtubule organizing center. Its subcellular location is the centrosome. The protein resides in the centriole. It localises to the spindle pole. The polypeptide is Centrosomal protein of 128 kDa (Cep128) (Mus musculus (Mouse)).